A 1224-amino-acid polypeptide reads, in one-letter code: DNA-directed RNA polymerase subunit beta'' (1224 aa).

Zn(2+) contacts are provided by Cys-223, Cys-297, Cys-304, and Cys-307.

Belongs to the RNA polymerase beta' chain family. RpoC2 subfamily. In terms of assembly, in plastids the minimal PEP RNA polymerase catalytic core is composed of four subunits: alpha, beta, beta', and beta''. When a (nuclear-encoded) sigma factor is associated with the core the holoenzyme is formed, which can initiate transcription. The cofactor is Zn(2+).

The protein localises to the plastid. The protein resides in the chloroplast. It catalyses the reaction RNA(n) + a ribonucleoside 5'-triphosphate = RNA(n+1) + diphosphate. Its function is as follows. DNA-dependent RNA polymerase catalyzes the transcription of DNA into RNA using the four ribonucleoside triphosphates as substrates. The sequence is that of DNA-directed RNA polymerase subunit beta'' from Porphyra purpurea (Red seaweed).